Here is a 965-residue protein sequence, read N- to C-terminus: Collagen alpha-1(I) chain (965 aa).

The tract at residues Gly-1–Pro-965 is disordered. Pro-18, Pro-21, Pro-23, Pro-32, Pro-35, Pro-38, Pro-53, Pro-68, Pro-74, Pro-83, and Pro-89 each carry 4-hydroxyproline. Low complexity predominate over residues Gln-26–Met-44. Residues Asn-56–Glu-70 show a composition bias toward basic and acidic residues. Lys-92 is modified (5-hydroxylysine; alternate). An O-linked (Gal...) hydroxylysine; alternate glycan is attached at Lys-92. Ser-98 carries the phosphoserine modification. Residues Asp-106 to Asn-122 show a composition bias toward low complexity. Pro-116, Pro-119, Pro-125, Pro-139, Pro-160, Pro-169, Pro-172, Pro-199, Pro-202, Pro-214, Pro-220, Pro-229, Pro-235, Pro-238, and Pro-253 each carry 4-hydroxyproline. A compositionally biased stretch (low complexity) spans Pro-139–Ala-157. A compositionally biased stretch (pro residues) spans Pro-159–Phe-171. Positions Ala-205–Ser-244 are enriched in low complexity. The residue at position 256 (Lys-256) is a 5-hydroxylysine. 4-hydroxyproline occurs at positions 262, 265, 269, 278, 293, 299, 308, and 314. Gly residues predominate over residues Gly-303 to Gly-312. Lys-323 is subject to 5-hydroxylysine. 24 positions are modified to 4-hydroxyproline: Pro-326, Pro-332, Pro-338, Pro-347, Pro-350, Pro-359, Pro-368, Pro-374, Pro-386, Pro-395, Pro-404, Pro-407, Pro-425, Pro-442, Pro-448, Pro-454, Pro-460, Pro-466, Pro-472, Pro-484, Pro-493, Pro-506, Pro-512, and Pro-521. Residues Lys-341–Arg-367 are compositionally biased toward low complexity. Low complexity predominate over residues Ala-376–Pro-395. Residues Pro-454–Gln-463 show a composition bias toward low complexity. Lys-533 bears the 5-hydroxylysine mark. 4-hydroxyproline occurs at positions 539, 554, and 560. Over residues Ser-566 to Ala-580 the composition is skewed to low complexity. Residue Ser-569 is modified to Phosphoserine. Pro-581, Pro-587, Pro-590, Pro-599, Pro-605, Pro-623, Pro-632, and Pro-641 each carry 4-hydroxyproline. The span at Ala-593 to Ala-620 shows a compositional bias: low complexity. Lys-644 carries the post-translational modification 5-hydroxylysine. Residues Ser-649–Val-665 are compositionally biased toward low complexity. Residues Pro-653 and Pro-659 each carry the 4-hydroxyproline modification. At Pro-667 the chain carries 3-hydroxyproline. A 4-hydroxyproline mark is found at Pro-668, Pro-677, Pro-680, Pro-716, Pro-725, Pro-743, Pro-752, Pro-755, Pro-761, Pro-776, Pro-782, Pro-788, Pro-796, and Pro-802. Residues Ser-710 to Pro-725 show a composition bias toward low complexity. Over residues Pro-775–Ala-785 the composition is skewed to pro residues. At Lys-811 the chain carries 5-hydroxylysine. 3 positions are modified to 4-hydroxyproline: Pro-819, Pro-822, and Pro-825. Pro residues predominate over residues Pro-819 to Val-831. Low complexity predominate over residues Ala-851 to Pro-865. A compositionally biased stretch (basic and acidic residues) spans Arg-866–Ile-880. Lys-869 is subject to 5-hydroxylysine. At Lys-881 the chain carries 5-hydroxylysine; alternate. O-linked (Gal...) hydroxylysine; alternate glycosylation is present at Lys-881. A 4-hydroxyproline mark is found at Pro-896, Pro-899, Pro-917, and Pro-932. Positions Pro-899–Pro-932 are enriched in low complexity. At Pro-937 the chain carries 3-hydroxyproline. Pro-938 is subject to 4-hydroxyproline. Residues Val-950 to Pro-965 are compositionally biased toward pro residues. Pro-952 bears the 3-hydroxyproline mark. Pro-953 is subject to 4-hydroxyproline. Pro-955 carries the post-translational modification 3-hydroxyproline. Residue Pro-956 is modified to 4-hydroxyproline. At Pro-958 the chain carries 3-hydroxyproline. A 4-hydroxyproline mark is found at Pro-959, Pro-962, and Pro-965.

This sequence belongs to the fibrillar collagen family. In terms of assembly, trimers of one alpha 2(I) and two alpha 1(I) chains. In terms of processing, contains mostly 4-hydroxyproline. Proline residues at the third position of the tripeptide repeating unit (G-X-Y) are hydroxylated in some or all of the chains. Contains 3-hydroxyproline at a few sites. This modification occurs on the first proline residue in the sequence motif Gly-Pro-Hyp, where Hyp is 4-hydroxyproline. Post-translationally, lysine residues at the third position of the tripeptide repeating unit (G-X-Y) are 5-hydroxylated in some or all of the chains. In terms of processing, O-glycosylated on hydroxylated lysine residues. The O-linked glycan consists of a Glc-Gal disaccharide. In terms of tissue distribution, expressed in bones.

Its subcellular location is the secreted. The protein localises to the extracellular space. It localises to the extracellular matrix. Type I collagen is a member of group I collagen (fibrillar forming collagen). The sequence is that of Collagen alpha-1(I) chain from Acratocnus sp. (strain SLP-2019) (Ground sloth).